Reading from the N-terminus, the 88-residue chain is ATP synthase subunit c (88 aa).

2 helical membrane passes run 10 to 30 and 68 to 88; these read ILAASAIGAGLAMIAGLGPGI and GIYSLVIALILLFANPLIRLL.

The protein belongs to the ATPase C chain family. As to quaternary structure, F-type ATPases have 2 components, F(1) - the catalytic core - and F(0) - the membrane proton channel. F(1) has five subunits: alpha(3), beta(3), gamma(1), delta(1), epsilon(1). F(0) has three main subunits: a(1), b(2) and c(10-14). The alpha and beta chains form an alternating ring which encloses part of the gamma chain. F(1) is attached to F(0) by a central stalk formed by the gamma and epsilon chains, while a peripheral stalk is formed by the delta and b chains.

The protein localises to the cell membrane. F(1)F(0) ATP synthase produces ATP from ADP in the presence of a proton or sodium gradient. F-type ATPases consist of two structural domains, F(1) containing the extramembraneous catalytic core and F(0) containing the membrane proton channel, linked together by a central stalk and a peripheral stalk. During catalysis, ATP synthesis in the catalytic domain of F(1) is coupled via a rotary mechanism of the central stalk subunits to proton translocation. In terms of biological role, key component of the F(0) channel; it plays a direct role in translocation across the membrane. A homomeric c-ring of between 10-14 subunits forms the central stalk rotor element with the F(1) delta and epsilon subunits. The sequence is that of ATP synthase subunit c from Alkaliphilus oremlandii (strain OhILAs) (Clostridium oremlandii (strain OhILAs)).